We begin with the raw amino-acid sequence, 642 residues long: Frizzled-1 (642 aa).

An N-terminal signal peptide occupies residues 1 to 68; sequence MAEEAAPSES…WLLEAPLLLG (68 aa). 2 disordered regions span residues 26–45 and 76–99; these read PGRREEVGHEDTASHRRPRA and QVSGPGQQAPPPPQPQQSGQQYNG. At 69-317 the chain is on the extracellular side; it reads VRAQAAGQVS…PEELRFSRTW (249 aa). One can recognise an FZ domain in the interval 106-225; it reads PDHGYCQPIS…HGAGELCVGQ (120 aa). Cystine bridges form between Cys-111-Cys-172, Cys-119-Cys-165, Cys-156-Cys-193, Cys-182-Cys-222, and Cys-186-Cys-210. N-linked (GlcNAc...) asparagine glycosylation occurs at Asn-125. A glycan (N-linked (GlcNAc...) asparagine) is linked at Asn-226. The helical transmembrane segment at 318-338 threads the bilayer; sequence IGIWSVLCCASTLFTVLTYLV. The Cytoplasmic portion of the chain corresponds to 339 to 349; that stretch reads DMRRFSYPERP. A helical transmembrane segment spans residues 350-370; it reads IIFLSGCYTAVAVAYIAGFLL. At 371-397 the chain is on the extracellular side; that stretch reads EDRVVCNDKFAEDGARTVAQGTKKEGC. A helical transmembrane segment spans residues 398–418; it reads TILFMMLYFFSMASSIWWVIL. The Cytoplasmic segment spans residues 419–440; sequence SLTWFLAAGMKWGHEAIEANSQ. A helical membrane pass occupies residues 441 to 461; sequence YFHLAAWAVPAIKTITILALG. Topologically, residues 462 to 484 are extracellular; the sequence is QVDGDVLSGVCFVGLNNVDALRG. A helical membrane pass occupies residues 485 to 505; that stretch reads FVLAPLFVYLFIGTSFLLAGF. The Cytoplasmic portion of the chain corresponds to 506 to 531; it reads VSLFRIRTIMKHDGTKTEKLEKLMVR. The chain crosses the membrane as a helical span at residues 532–552; sequence IGVFSVLYTVPATIVIACYFY. Topologically, residues 553-593 are extracellular; sequence EQAFRDQWERSWVAQSCKSYAIPCPHLQGGGGVPPHPPMSP. Residues 594 to 614 form a helical membrane-spanning segment; the sequence is DFTVFMIKYLMTLIVGITSGF. Residues 615 to 642 lie on the Cytoplasmic side of the membrane; the sequence is WIWSGKTLNSWRKFYTRLTNSKQGETTV. Residues 620–625 carry the Lys-Thr-X-X-X-Trp motif, mediates interaction with the PDZ domain of Dvl family members motif; the sequence is KTLNSW. A PDZ-binding motif is present at residues 640 to 642; sequence TTV.

The protein belongs to the G-protein coupled receptor Fz/Smo family. Interacts with MYOC. Interacts with WNT7B. Post-translationally, ubiquitinated by ZNRF3, leading to its degradation by the proteasome. In terms of tissue distribution, expressed in chondrocytes.

It localises to the cell membrane. Functionally, receptor for Wnt proteins. Activated by WNT7B. Activated by WNT3A, WNT3, WNT1 and to a lesser extent WNT2, but apparently not by WNT4, WNT5A, WNT5B, WNT6, WNT7A or WNT7B. Contradictory results showing activation by WNT7B have been described for mouse. Functions in the canonical Wnt/beta-catenin signaling pathway. The canonical Wnt/beta-catenin signaling pathway leads to the activation of disheveled proteins, inhibition of GSK-3 kinase, nuclear accumulation of beta-catenin and activation of Wnt target genes. A second signaling pathway involving PKC and calcium fluxes has been seen for some family members, but it is not yet clear if it represents a distinct pathway or if it can be integrated in the canonical pathway, as PKC seems to be required for Wnt-mediated inactivation of GSK-3 kinase. Both pathways seem to involve interactions with G-proteins. May be involved in transduction and intercellular transmission of polarity information during tissue morphogenesis and/or in differentiated tissues. The protein is Frizzled-1 (Fzd1) of Mus musculus (Mouse).